The following is a 503-amino-acid chain: MQVYLERARSRQQDFLYPLLFREYIYGLAYSHHLNRSIFVENVGYDNKYSLLIVKRLITRMYQQNHFIISANDSNKNAFWGYNKNFYSQIISEGFAIVVEIPFFLQLSSSLEEAEIIQYYKNLRSIHSIFPFLEDKMTYLNYVSDIRIPYPMHLEILVQILRYWVKDAPFFHFLRLFLYNFCNWNSFITTKKSISTFSKSNPRFFLFLYNFYVCEYESIFVFLRNKSSHLRLKSFSVFFERIFFYAKREHLVKVFSKDFSYTFTFFKDPYIHYVRYQGKCILASKNAPFLMNKWNHYFLHLWQCFFDVWSQPRMININPLSEHSFQLLGYFSNVRLNRSVVRSQMLQNTFLIEIVIKKLDIIVPIIPLIRSLAKAKFCNVLGQXISKPVWADSSDFDIIDRFLRICRSLSHYYNGSSKKKSLYRIKYILRFSCIKTLACKHKSTVRAFLKRSGSEELLQEFFTEEEDIFSLIFPRDSSTLQRLHRNRIWYLDILFSNDLVHDE.

The protein belongs to the intron maturase 2 family. MatK subfamily.

Its subcellular location is the plastid. The protein resides in the chloroplast. Functionally, usually encoded in the trnK tRNA gene intron. Probably assists in splicing its own and other chloroplast group II introns. This chain is Maturase K, found in Vicia villosa (Hairy vetch).